The primary structure comprises 579 residues: uncharacterized protein (579 aa).

3 consecutive transmembrane segments (helical) span residues 173-193, 196-216, and 218-238; these read IAMG…GGLA, FVAA…MIGA, and YLGT…GFGA.

Belongs to the TMCO4 family.

The protein resides in the cytoplasm. It is found in the nucleus membrane. This is an uncharacterized protein from Schizosaccharomyces pombe (strain 972 / ATCC 24843) (Fission yeast).